The primary structure comprises 467 residues: Retinoic acid receptor RXR-alpha (467 aa).

The disordered stretch occupies residues 1 to 112 (MDTKHFLPLD…MNPVSSTEDI (112 aa)). The modulating domain stretch occupies residues 1–139 (MDTKHFLPLD…GNMASFTKHI (139 aa)). Lysine 4 participates in a covalent cross-link: Glycyl lysine isopeptide (Lys-Gly) (interchain with G-Cter in SUMO2). Over residues 11-25 (FSTQVNSSSLNSPTG) the composition is skewed to polar residues. Serine 22 and serine 28 each carry phosphoserine. The span at 32-52 (PSLHPSLGPGIGSPLGSPGQL) shows a compositional bias: low complexity. Residues 54–63 (SPISTLSSPI) show a composition bias toward polar residues. Residues serine 61 and serine 75 each carry the phosphoserine; by MAPK8 and MAPK9 modification. Over residues 83–109 (SVPTTPTLGFGTGSPQLNSPMNPVSST) the composition is skewed to polar residues. Threonine 87 carries the post-translational modification Phosphothreonine; by MAPK8 and MAPK9. Lysine 113 participates in a covalent cross-link: Glycyl lysine isopeptide (Lys-Gly) (interchain with G-Cter in SUMO). The residue at position 134 (serine 134) is a Phosphoserine. Cysteine 140 and cysteine 143 together coordinate Zn(2+). The NR C4-type zinc-finger motif lies at 140 to 160 (CAICGDRSSGKHYGVYSCEGC). The segment at residues 140–205 (CAICGDRSSG…RYQKCLAMGM (66 aa)) is a DNA-binding region (nuclear receptor). Position 150 is an N6-acetyllysine (lysine 150). Zn(2+) contacts are provided by cysteine 157 and cysteine 160. The tract at residues 165 to 170 (KRTVRK) is nuclear localization signal. Residues cysteine 176, cysteine 182, cysteine 192, and cysteine 195 each coordinate Zn(2+). The segment at 176-200 (CRDNKDCLIDKRQRNRCQYCRYQKC) adopts an NR C4-type zinc-finger fold. Residues 206–229 (KREAVQEERQRGKDRNENEVESTS) are hinge. Basic and acidic residues predominate over residues 211 to 223 (QEERQRGKDRNEN). The segment at 211–233 (QEERQRGKDRNENEVESTSSANE) is disordered. Residues 232 to 463 (NEDMPVEKIL…TFLMEMLEAP (232 aa)) enclose the NR LBD domain. The residue at position 264 (serine 264) is a Phosphoserine. Serine 265 carries the post-translational modification Phosphoserine; by MAPK8 and MAPK9. The 9-cis-retinoate site is built by arginine 321 and alanine 332. All-trans-retinoate-binding residues include arginine 321 and alanine 332. The required for nuclear export stretch occupies residues 353-373 (RVLTELVSKMRDMQMDKTELG).

This sequence belongs to the nuclear hormone receptor family. NR2 subfamily. Homodimer. Heterodimer with RARA; required for ligand-dependent retinoic acid receptor transcriptional activity. Heterodimer with PPARA (via the leucine-like zipper in the LBD); the interaction is required for PPARA transcriptional activity. Heterodimerizes with PPARG. Heterodimerizes (via NR LBD) with RARB. Heterodimerizes with NR1H4; the heterodimerization enhances the binding affinity for LXXLL motifs from coactivators. Interacts with coactivator NCO6. Interacts with coactivator NCO3. Interacts with coactivator FAM120B. Interacts with coactivator PELP1, SENP6, SFPQ, DNTTIP2 and RNF8. Interacts with PRMT2. Interacts with ASXL1. Interacts with BHLHE40/DEC1, BHLHE41/DEC2, NCOR1 and NCOR2. Interacts in a ligand-dependent fashion with MED1 and NCOA1. Interacts with VDR. Interacts with EP300; the interaction is decreased by 9-cis retinoic acid. Heterodimer (via C-terminus) with NR4A1 (via DNA-binding domain); the interaction is enhanced by 9-cis retinoic acid. NR4A1 competes with EP300 for interaction with RXRA and thereby attenuates EP300 mediated acetylation of RXRA. In the absence of hormonal ligand, interacts with TACC1. Interacts ith IGFBP3. Post-translationally, acetylated by EP300; acetylation enhances DNA binding and transcriptional activity. Phosphorylated on serine and threonine residues mainly in the N-terminal modulating domain. Constitutively phosphorylated on Ser-22 in the presence or absence of ligand. Under stress conditions, hyperphosphorylated by activated JNK on Ser-61, Ser-75, Thr-87 and Ser-265. Phosphorylated on Ser-28, in vitro, by PKA. This phosphorylation is required for repression of cAMP-mediated transcriptional activity of RARA. In terms of processing, ubiquitinated by UBR5, leading to its degradation: UBR5 specifically recognizes and binds ligand-bound RXRA when it is not associated with coactivators (NCOAs). In presence of NCOAs, the UBR5-degron is not accessible, preventing its ubiquitination and degradation. Post-translationally, sumoylation negatively regulates transcriptional activity. Desumoylated specifically by SENP6. Expressed in macrophages (at protein level).

Its subcellular location is the nucleus. It is found in the cytoplasm. The protein localises to the mitochondrion. In terms of biological role, receptor for retinoic acid that acts as a transcription factor. Forms homo- or heterodimers with retinoic acid receptors (RARs) and binds to target response elements in response to their ligands, all-trans or 9-cis retinoic acid, to regulate gene expression in various biological processes. The RAR/RXR heterodimers bind to the retinoic acid response elements (RARE) composed of tandem 5'-AGGTCA-3' sites known as DR1-DR5 to regulate transcription. The high affinity ligand for retinoid X receptors (RXRs) is 9-cis retinoic acid. In the absence of ligand, the RXR-RAR heterodimers associate with a multiprotein complex containing transcription corepressors that induce histone deacetylation, chromatin condensation and transcriptional suppression. On ligand binding, the corepressors dissociate from the receptors and coactivators are recruited leading to transcriptional activation. Serves as a common heterodimeric partner for a number of nuclear receptors, such as RARA, RARB and PPARA. The RXRA/RARB heterodimer can act as a transcriptional repressor or transcriptional activator, depending on the RARE DNA element context. The RXRA/PPARA heterodimer is required for PPARA transcriptional activity on fatty acid oxidation genes such as ACOX1 and the P450 system genes. Together with RARA, positively regulates microRNA-10a expression, thereby inhibiting the GATA6/VCAM1 signaling response to pulsatile shear stress in vascular endothelial cells. Acts as an enhancer of RARA binding to RARE DNA element. May facilitate the nuclear import of heterodimerization partners such as VDR and NR4A1. Promotes myelin debris phagocytosis and remyelination by macrophages. Plays a role in the attenuation of the innate immune system in response to viral infections, possibly by negatively regulating the transcription of antiviral genes such as type I IFN genes. Involved in the regulation of calcium signaling by repressing ITPR2 gene expression, thereby controlling cellular senescence. The protein is Retinoic acid receptor RXR-alpha (Rxra) of Mus musculus (Mouse).